A 571-amino-acid chain; its full sequence is Proline--tRNA ligase (571 aa).

Belongs to the class-II aminoacyl-tRNA synthetase family. ProS type 1 subfamily. Homodimer.

It localises to the cytoplasm. The enzyme catalyses tRNA(Pro) + L-proline + ATP = L-prolyl-tRNA(Pro) + AMP + diphosphate. Its function is as follows. Catalyzes the attachment of proline to tRNA(Pro) in a two-step reaction: proline is first activated by ATP to form Pro-AMP and then transferred to the acceptor end of tRNA(Pro). As ProRS can inadvertently accommodate and process non-cognate amino acids such as alanine and cysteine, to avoid such errors it has two additional distinct editing activities against alanine. One activity is designated as 'pretransfer' editing and involves the tRNA(Pro)-independent hydrolysis of activated Ala-AMP. The other activity is designated 'posttransfer' editing and involves deacylation of mischarged Ala-tRNA(Pro). The misacylated Cys-tRNA(Pro) is not edited by ProRS. The sequence is that of Proline--tRNA ligase from Shewanella baltica (strain OS185).